The following is a 106-amino-acid chain: ATP-dependent Clp protease adapter protein ClpS (106 aa).

Belongs to the ClpS family. As to quaternary structure, binds to the N-terminal domain of the chaperone ClpA.

In terms of biological role, involved in the modulation of the specificity of the ClpAP-mediated ATP-dependent protein degradation. The protein is ATP-dependent Clp protease adapter protein ClpS of Yersinia enterocolitica serotype O:8 / biotype 1B (strain NCTC 13174 / 8081).